The chain runs to 112 residues: cAMP-regulated phosphoprotein 19 (112 aa).

Over residues 1 to 11 the composition is skewed to low complexity; it reads MSAESPEPASA. Residues 1–48 are disordered; the sequence is MSAESPEPASAEEQKEMEDKVISPEKAEEAKLKARYPHLGQKPGGSDF. At Ser2 the chain carries N-acetylserine. The span at 12–32 shows a compositional bias: basic and acidic residues; that stretch reads EEQKEMEDKVISPEKAEEAKL. Ser62 and Ser104 each carry phosphoserine; by GWL. A disordered region spans residues 73 to 112; that stretch reads KNKQLPTAAPDKTEVTGDHIPTPQDLPQRKPSLVASKLAG. A Phosphoserine; by PKA modification is found at Ser104.

The protein belongs to the endosulfine family. In terms of assembly, interacts (when phosphorylated at Ser-62) with PPP2R2D. Phosphorylation at Ser-62 by MASTL/GWL during mitosis is essential for interaction with PPP2R2D (PR55-delta) and subsequent inactivation of PP2A.

The protein localises to the cytoplasm. In terms of biological role, protein phosphatase inhibitor that specifically inhibits protein phosphatase 2A (PP2A) during mitosis. Inhibition of PP2A is enhanced when ARPP19 is phosphorylated. When phosphorylated at Ser-62 during mitosis, specifically interacts with PPP2R2D (PR55-delta) and inhibits its activity, leading to inactivation of PP2A, an essential condition to keep cyclin-B1-CDK1 activity high during M phase. The protein is cAMP-regulated phosphoprotein 19 (ARPP19) of Gallus gallus (Chicken).